Reading from the N-terminus, the 293-residue chain is Ribosomal protein L11 methyltransferase (293 aa).

Residues threonine 145, glycine 166, aspartate 188, and asparagine 230 each coordinate S-adenosyl-L-methionine.

The protein belongs to the methyltransferase superfamily. PrmA family.

The protein localises to the cytoplasm. The catalysed reaction is L-lysyl-[protein] + 3 S-adenosyl-L-methionine = N(6),N(6),N(6)-trimethyl-L-lysyl-[protein] + 3 S-adenosyl-L-homocysteine + 3 H(+). Its function is as follows. Methylates ribosomal protein L11. The protein is Ribosomal protein L11 methyltransferase of Actinobacillus pleuropneumoniae serotype 3 (strain JL03).